The primary structure comprises 344 residues: S-adenosylmethionine:tRNA ribosyltransferase-isomerase (344 aa).

The protein belongs to the QueA family. Monomer.

It is found in the cytoplasm. The catalysed reaction is 7-aminomethyl-7-carbaguanosine(34) in tRNA + S-adenosyl-L-methionine = epoxyqueuosine(34) in tRNA + adenine + L-methionine + 2 H(+). Its pathway is tRNA modification; tRNA-queuosine biosynthesis. Functionally, transfers and isomerizes the ribose moiety from AdoMet to the 7-aminomethyl group of 7-deazaguanine (preQ1-tRNA) to give epoxyqueuosine (oQ-tRNA). The chain is S-adenosylmethionine:tRNA ribosyltransferase-isomerase from Lactiplantibacillus plantarum (strain ATCC BAA-793 / NCIMB 8826 / WCFS1) (Lactobacillus plantarum).